Consider the following 422-residue polypeptide: Phosphoglycerate kinase (422 aa).

Substrate is bound by residues 24-26, 64-67, R129, and R171; these read DLN and HLGR. ATP contacts are provided by residues K222, G309, E340, and 370–373; that span reads DIDT.

Belongs to the phosphoglycerate kinase family. Monomer.

It is found in the cytoplasm. It catalyses the reaction (2R)-3-phosphoglycerate + ATP = (2R)-3-phospho-glyceroyl phosphate + ADP. It participates in carbohydrate degradation; glycolysis; pyruvate from D-glyceraldehyde 3-phosphate: step 2/5. This is Phosphoglycerate kinase (pgk) from Ureaplasma parvum serovar 3 (strain ATCC 700970).